Reading from the N-terminus, the 535-residue chain is Isoleucine N-monooxygenase 1 (535 aa).

Topologically, residues 1–8 (MGLMPDFL) are cytoplasmic. A helical; Signal-anchor for type II membrane protein membrane pass occupies residues 9–29 (SLCHEFPWTFLLVVIFSFMIF). Residues 30-535 (KVTKTHLVNK…AAELYRTNEI (506 aa)) are Lumenal-facing. N-linked (GlcNAc...) asparagine glycans are attached at residues Asn-38, Asn-232, and Asn-404. Cys-470 lines the heme pocket.

It belongs to the cytochrome P450 family. Heme serves as cofactor. In terms of tissue distribution, exclusively expressed in aerial parts. Highest expression in the apical leaves. Also detected in the second leaf from the top and in the stem. Not expressed in older leaves or roots.

Its subcellular location is the microsome membrane. The catalysed reaction is L-isoleucine + 2 reduced [NADPH--hemoprotein reductase] + 2 O2 = (1E,2S)-2-methylbutanal oxime + 2 oxidized [NADPH--hemoprotein reductase] + CO2 + 3 H2O + 2 H(+). It catalyses the reaction L-isoleucine + reduced [NADPH--hemoprotein reductase] + O2 = N-hydroxy-L-isoleucine + oxidized [NADPH--hemoprotein reductase] + H2O + 2 H(+). The enzyme catalyses N-hydroxy-L-isoleucine + reduced [NADPH--hemoprotein reductase] + O2 = N,N-dihydroxy-L-isoleucine + oxidized [NADPH--hemoprotein reductase] + H2O + H(+). It carries out the reaction L-valine + 2 reduced [NADPH--hemoprotein reductase] + 2 O2 = (E)-2-methylpropanal oxime + 2 oxidized [NADPH--hemoprotein reductase] + CO2 + 3 H2O + 2 H(+). The catalysed reaction is L-valine + reduced [NADPH--hemoprotein reductase] + O2 = N-hydroxy-L-valine + oxidized [NADPH--hemoprotein reductase] + H2O + 2 H(+). It catalyses the reaction N-hydroxy-L-valine + reduced [NADPH--hemoprotein reductase] + O2 = N,N-dihydroxy-L-valine + oxidized [NADPH--hemoprotein reductase] + H2O + H(+). Its pathway is secondary metabolite biosynthesis. In terms of biological role, involved in the biosynthesis of the cyanogenic glucosides linamarin and lotaustralin and of the nitirle glucosides rhodiocyanoside A and D. Can use L-isoleucine &gt; L-valine as substrate, but not L-leucine, L-phenylalanine or L-tyrosine. Catalyzes multi-step reactions starting with two successive N-hydroxylations using L-isoleucine and, to a lower extent, L-valine as substrates leading to the formation of N,N-dihydroxy-L-valine and N,N-dihydroxy-L-isoleucine, respectively; following spontaneous reactions lead to the production of (E)-2-methylpropanal oxime and (1E,2S)-2-methylbutanal oxime, respectively. This Lotus japonicus (Lotus corniculatus var. japonicus) protein is Isoleucine N-monooxygenase 1.